The primary structure comprises 637 residues: Threonine--tRNA ligase (637 aa).

In terms of domain architecture, TGS spans 1-61 (MLNITLPDGS…VEDSAVQIIT (61 aa)). The catalytic stretch occupies residues 242-533 (DHRKLGKQLD…LIENHAGSFP (292 aa)). 3 residues coordinate Zn(2+): C333, H384, and H510.

Belongs to the class-II aminoacyl-tRNA synthetase family. As to quaternary structure, homodimer. Zn(2+) serves as cofactor.

It is found in the cytoplasm. It carries out the reaction tRNA(Thr) + L-threonine + ATP = L-threonyl-tRNA(Thr) + AMP + diphosphate + H(+). Its function is as follows. Catalyzes the attachment of threonine to tRNA(Thr) in a two-step reaction: L-threonine is first activated by ATP to form Thr-AMP and then transferred to the acceptor end of tRNA(Thr). Also edits incorrectly charged L-seryl-tRNA(Thr). The sequence is that of Threonine--tRNA ligase from Neisseria meningitidis serogroup A / serotype 4A (strain DSM 15465 / Z2491).